The chain runs to 164 residues: Transcriptional regulator MraZ (164 aa).

SpoVT-AbrB domains lie at 7–60 (HYTN…EIDG) and 83–126 (SEIL…EPGR). Residues 144–164 (QLSARHAAPDAPPLRSHGARE) are disordered.

The protein belongs to the MraZ family. Forms oligomers.

The protein resides in the cytoplasm. It is found in the nucleoid. In Methylocella silvestris (strain DSM 15510 / CIP 108128 / LMG 27833 / NCIMB 13906 / BL2), this protein is Transcriptional regulator MraZ.